The following is a 216-amino-acid chain: Soluble inorganic pyrophosphatase 5 (216 aa).

Residues 1–20 (MNGEEVKTSQPQKKLQNPTP) are disordered. Positions 8 to 20 (TSQPQKKLQNPTP) are enriched in polar residues. Substrate-binding residues include K66 and R80. The active-site Proton donor is Y88. Y92 serves as a coordination point for substrate. Residues D102, D107, and D139 each contribute to the Mg(2+) site. Residue Y176 participates in substrate binding.

It belongs to the PPase family. Mg(2+) is required as a cofactor.

It localises to the cytoplasm. It catalyses the reaction diphosphate + H2O = 2 phosphate + H(+). This Arabidopsis thaliana (Mouse-ear cress) protein is Soluble inorganic pyrophosphatase 5.